Reading from the N-terminus, the 627-residue chain is Mitochondrial distribution and morphology protein 34 (627 aa).

Residues 1–195 (MAFNFNWSPL…LPAIIHRLSL (195 aa)) enclose the SMP-LTD domain. Disordered stretches follow at residues 209–230 (SAQV…NPPQ), 332–470 (ASLA…RTSP), 486–557 (LQRQ…SRPS), and 586–627 (RIQD…AYRH). 2 stretches are compositionally biased toward low complexity: residues 215–225 (PSLDGPGLDPL) and 332–341 (ASLASSSHSR). The segment covering 360–372 (RHSKAHARKRKKR) has biased composition (basic residues). A compositionally biased stretch (basic and acidic residues) spans 373-384 (VVDLRRRPKSAD). Positions 390-412 (SGESAYTETSTTTSAVSVFSGST) are enriched in low complexity. The span at 436–451 (TLRDRIAARDDAERNS) shows a compositional bias: basic and acidic residues. The span at 528–557 (PNASNNYTSSSSPSARDPQQQQPQQLSRPS) shows a compositional bias: low complexity.

The protein belongs to the MDM34 family. As to quaternary structure, component of the ER-mitochondria encounter structure (ERMES) or MDM complex, composed of MMM1, MDM10, MDM12 and MDM34.

The protein localises to the mitochondrion outer membrane. Its function is as follows. Component of the ERMES/MDM complex, which serves as a molecular tether to connect the endoplasmic reticulum (ER) and mitochondria. Components of this complex are involved in the control of mitochondrial shape and protein biogenesis, and function in nonvesicular lipid trafficking between the ER and mitochondria. MDM34 is required for the interaction of the ER-resident membrane protein MMM1 and the outer mitochondrial membrane-resident beta-barrel protein MDM10. The sequence is that of Mitochondrial distribution and morphology protein 34 from Blastomyces gilchristii (strain SLH14081) (Blastomyces dermatitidis).